Here is a 1073-residue protein sequence, read N- to C-terminus: Pleckstrin homology domain-containing family G member 5 (1073 aa).

Disordered stretches follow at residues 1–28, 91–135, 217–261, 278–309, and 367–388; these read MGTGPGVSGRRAAARPSSELPSPDSQLL, VSTR…ARRR, PGDE…ESSL, GEAGIPGHEPPAPSSCSLPVGSSGGTSSGINE, and SWEEEEEDDEEDEESSGLRLED. Basic and acidic residues-rich tracts occupy residues 217 to 231 and 249 to 260; these read PGDEGKVEQGVKDSK and ERVDPQSRRESS. A compositionally biased stretch (acidic residues) spans 367 to 381; that stretch reads SWEEEEEDDEEDEES. Positions 406-598 constitute a DH domain; the sequence is HQQEAVWELL…ERFIHHVNTC (193 aa). The PH domain maps to 654–754; that stretch reads QLLLEGSLRM…WVDTIYNAQN (101 aa). Disordered regions lie at residues 762–818, 833–873, and 899–925; these read QLSA…TSDG, TLSS…GPVD, and PVVEPAPVPQTPSPQPSPRLRRRTPVQ. Positions 777-790 are enriched in acidic residues; the sequence is LEEEEDEQEEEGEE. 2 stretches are compositionally biased toward polar residues: residues 791–809 and 844–864; these read SGTSAASSPTILRKSSNSL and VSSQSDESSLSNTASSVTPTS. Thr793 bears the Phosphothreonine mark. Ser798 bears the Phosphoserine mark. The segment covering 900-915 has biased composition (pro residues); that stretch reads VVEPAPVPQTPSPQPS. At Thr909 the chain carries Phosphothreonine. Phosphoserine occurs at positions 911, 936, and 941. Residues 993 to 1046 form a disordered region; the sequence is MCDPCHGPQLSESENRPSHMTGGPADSARRRCREMPSGTMSRVQSEPPSGVSAQ. Polar residues predominate over residues 1030–1039; it reads GTMSRVQSEP.

As to quaternary structure, interacts with GIPC1/synectin and RHOA. As to expression, expressed in neurons and glial cells of the peripheral nervous system, with highest levels of expression in the brain and sciatic nerve endoneurium. Isoform 2 is expressed at detectable levels only in malignant cells.

Its subcellular location is the cytoplasm. It localises to the perinuclear region. The protein localises to the cell membrane. It is found in the cell junction. The protein resides in the cell projection. Its subcellular location is the lamellipodium. Its function is as follows. Functions as a guanine exchange factor (GEF) for RAB26 and thus regulates autophagy of synaptic vesicles in axon terminal of motoneurons. Involved in the control of neuronal cell differentiation. Plays a role in angiogenesis through regulation of endothelial cells chemotaxis. Also affects the migration, adhesion, and matrix/bone degradation in macrophages and osteoclasts. This is Pleckstrin homology domain-containing family G member 5 (Plekhg5) from Mus musculus (Mouse).